The chain runs to 276 residues: Transmembrane protein 53 (276 aa).

A helical transmembrane segment spans residues 170 to 190 (LLLLAAFALVVILFHFLLAPF).

The protein belongs to the TMEM53 family. In terms of tissue distribution, expressed in liver (at protein level).

It is found in the nucleus outer membrane. Its function is as follows. Negatively regulates bone morphogenetic protein (BMP) signaling in osteoblast lineage cells by blocking cytoplasm-nucleus translocation of phosphorylated SMAD1/5/9 proteins. This chain is Transmembrane protein 53 (Tmem53), found in Mus musculus (Mouse).